The sequence spans 359 residues: Methionine import ATP-binding protein MetN (359 aa).

The interval 1–21 (MSTPASTPAPDGSHQRDHHPG) is disordered. Positions 24–264 (VEFRGVTKVF…PQTTVAQRFV (241 aa)) constitute an ABC transporter domain. ATP is bound at residue 61-68 (GYSGAGKS).

The protein belongs to the ABC transporter superfamily. Methionine importer (TC 3.A.1.24) family. The complex is composed of two ATP-binding proteins (MetN), two transmembrane proteins (MetI) and a solute-binding protein (MetQ).

Its subcellular location is the cell membrane. It catalyses the reaction L-methionine(out) + ATP + H2O = L-methionine(in) + ADP + phosphate + H(+). It carries out the reaction D-methionine(out) + ATP + H2O = D-methionine(in) + ADP + phosphate + H(+). Its function is as follows. Part of the ABC transporter complex MetNIQ involved in methionine import. Responsible for energy coupling to the transport system. This Corynebacterium efficiens (strain DSM 44549 / YS-314 / AJ 12310 / JCM 11189 / NBRC 100395) protein is Methionine import ATP-binding protein MetN.